A 229-amino-acid chain; its full sequence is Putative 3-methyladenine DNA glycosylase (229 aa).

Belongs to the DNA glycosylase MPG family.

The chain is Putative 3-methyladenine DNA glycosylase from Enterococcus faecalis (strain ATCC 700802 / V583).